The sequence spans 180 residues: Isopentenyl-diphosphate Delta-isomerase (180 aa).

The Mn(2+) site is built by His-26 and His-32. Positions 30-168 (ALHLAFSVLL…PELFTAWFPQ (139 aa)) constitute a Nudix hydrolase domain. Residue Cys-70 is part of the active site. Cys-70 provides a ligand contact to Mg(2+). His-72 serves as a coordination point for Mn(2+). A Mg(2+)-binding site is contributed by Glu-90. Positions 117 and 119 each coordinate Mn(2+). Glu-119 is an active-site residue.

It belongs to the IPP isomerase type 1 family. The cofactor is Mg(2+). It depends on Mn(2+) as a cofactor.

The protein localises to the cytoplasm. The enzyme catalyses isopentenyl diphosphate = dimethylallyl diphosphate. The protein operates within isoprenoid biosynthesis; dimethylallyl diphosphate biosynthesis; dimethylallyl diphosphate from isopentenyl diphosphate: step 1/1. In terms of biological role, catalyzes the 1,3-allylic rearrangement of the homoallylic substrate isopentenyl (IPP) to its highly electrophilic allylic isomer, dimethylallyl diphosphate (DMAPP). This chain is Isopentenyl-diphosphate Delta-isomerase, found in Photobacterium profundum (strain SS9).